The following is a 146-amino-acid chain: Large ribosomal subunit protein uL23m (146 aa).

The segment at 108 to 146 (PDLFPEKEPTSPDPLEEELPQQRQSSDPRCPGIPSWFGL) is disordered.

This sequence belongs to the universal ribosomal protein uL23 family. As to quaternary structure, component of the mitochondrial ribosome large subunit (39S) which comprises a 16S rRNA and about 50 distinct proteins.

Its subcellular location is the mitochondrion. The sequence is that of Large ribosomal subunit protein uL23m (Mrpl23) from Rattus norvegicus (Rat).